We begin with the raw amino-acid sequence, 124 residues long: Basic leucine zipper transcriptional factor ATF-like (124 aa).

A compositionally biased stretch (polar residues) spans methionine 1–glycine 23. Positions methionine 1–glutamate 60 are disordered. The bZIP domain maps to aspartate 27 to histidine 90. A basic motif region spans residues arginine 29–lysine 51. The segment at leucine 55–leucine 83 is leucine-zipper.

The protein belongs to the bZIP family.

It is found in the nucleus. It localises to the cytoplasm. Its function is as follows. AP-1 family transcription factor that controls the differentiation of lineage-specific cells in the immune system: specifically mediates the differentiation of T-helper 17 cells (Th17), follicular T-helper cells (TfH), CD8(+) dendritic cells and class-switch recombination (CSR) in B-cells. The sequence is that of Basic leucine zipper transcriptional factor ATF-like (batf) from Danio rerio (Zebrafish).